The chain runs to 316 residues: Large ribosomal subunit protein uL10 (316 aa).

The segment at 289–316 (AAAAAPAKEAPKEESEESDEDMGFGLFD) is disordered.

This sequence belongs to the universal ribosomal protein uL10 family. P0 forms a pentameric complex by interaction with dimers of P1 and P2. Post-translationally, phosphorylated.

It is found in the nucleus. The protein resides in the cytoplasm. Functionally, ribosomal protein P0 is the functional equivalent of E.coli protein L10. The chain is Large ribosomal subunit protein uL10 (RPLP0) from Gallus gallus (Chicken).